A 4042-amino-acid chain; its full sequence is Polyketide synthase-nonribosomal peptide synthetase phmA (4042 aa).

The 402-residue stretch at 10 to 411 (NEPIAIVGSA…GANAHAILEA (402 aa)) folds into the Ketosynthase family 3 (KS3) domain. An acyl transferase region spans residues 519–837 (VFTGQGAQWA…TGLLSRDRDD (319 aa)). Residues 909-1042 (HELLGTKCPD…GRISALFGPP (134 aa)) are N-terminal hotdog fold. Positions 909–1208 (HELLGTKCPD…LHTKPLGHAT (300 aa)) are dehydratase (DH) domain. Residues 909–1210 (HELLGTKCPD…TKPLGHATPE (302 aa)) form the PKS/mFAS DH domain. The Proton acceptor; for dehydratase activity role is filled by histidine 941. A C-terminal hotdog fold region spans residues 1057 to 1210 (MIDVDPEQFY…TKPLGHATPE (154 aa)). The active-site Proton donor; for dehydratase activity is aspartate 1117. Residues 1349 to 1572 (DDMLNDFYVK…VDEHVEFIRN (224 aa)) form a methyltransferase (MT) domain region. The segment at 2073–2246 (TYWLVGLTGG…AGSVINIGAI (174 aa)) is ketoreductase (KR)domain. The region spanning 2351–2433 (ATTADEVNEA…ELVSAAQEQL (83 aa)) is the Carrier 1 domain. Serine 2393 is modified (O-(pantetheine 4'-phosphoryl)serine). Disordered regions lie at residues 2460-2504 (KTET…SKDA) and 2535-2554 (ATRS…PEND). The span at 2479-2490 (EVDEEEQEEDEA) shows a compositional bias: acidic residues. Residues 2495–2504 (NFFSSASKDA) are compositionally biased toward polar residues. Residues 2536-2549 (TRSKTSSSSSSFTS) are compositionally biased toward low complexity. The condensation stretch occupies residues 2584–3019 (RVSPMSFGQA…LGRPPLYDPQ (436 aa)). The tract at residues 3047–3443 (EMASRFGSQI…TADGLVLEGR (397 aa)) is adenylation. A Carrier 2 domain is found at 3562–3642 (KENKSPESEL…AMLNLISPAS (81 aa)). Serine 3602 carries the post-translational modification O-(pantetheine 4'-phosphoryl)serine. Residues 3703 to 3924 (ITGASGFLGK…DFVSVESVAH (222 aa)) form a reductase-like region.

The protein belongs to the NRP synthetase family.

It participates in mycotoxin biosynthesis. Its function is as follows. Hybrid PKS-NRPS synthetase; part of the gene cluster that mediates the biosynthesis of the mycotoxins phomacins, leucine-derived cytochalasans with potent actin polymerization-inhibitory activities and monocot-specific antigerminative activities. The first step in the pathway is catalyzed by the hybrid PKS-NRPS phmA, assisted by the enoyl reductase phmE, that are responsible for fusion of the leucine precursor and the polyketide backbone to produce a 2-pyrrolidone intermediate. The polyketide synthase module (PKS) of phmA is responsible for the synthesis of the polyketide backbone and the downstream nonribosomal peptide synthetase (NRPS) amidates the carboxyl end of the polyketide with the leucine precursor. Because phmA lacks a designated enoylreductase (ER) domain, the required activity is provided the enoyl reductase phmE. Reduction by the hydrolyase phmG, followed by dehydration and intra-molecular Diels-Alder cyclization by the Diels-Alderase phmD then yield the required isoindolone-fused macrocycle. A number of oxidative steps catalyzed by the tailoring cytochrome P450 monooxygenase phmB, the FAD-linked oxidoreductase phmC and the short-chain dehydrogenase/reductase phmF, are further required to afford the final products, phomacin D and phomacin E. The sequence is that of Polyketide synthase-nonribosomal peptide synthetase phmA from Phaeosphaeria nodorum (strain SN15 / ATCC MYA-4574 / FGSC 10173) (Glume blotch fungus).